The sequence spans 159 residues: SsrA-binding protein (159 aa).

It belongs to the SmpB family.

The protein localises to the cytoplasm. Required for rescue of stalled ribosomes mediated by trans-translation. Binds to transfer-messenger RNA (tmRNA), required for stable association of tmRNA with ribosomes. tmRNA and SmpB together mimic tRNA shape, replacing the anticodon stem-loop with SmpB. tmRNA is encoded by the ssrA gene; the 2 termini fold to resemble tRNA(Ala) and it encodes a 'tag peptide', a short internal open reading frame. During trans-translation Ala-aminoacylated tmRNA acts like a tRNA, entering the A-site of stalled ribosomes, displacing the stalled mRNA. The ribosome then switches to translate the ORF on the tmRNA; the nascent peptide is terminated with the 'tag peptide' encoded by the tmRNA and targeted for degradation. The ribosome is freed to recommence translation, which seems to be the essential function of trans-translation. This is SsrA-binding protein from Coxiella burnetii (strain CbuK_Q154) (Coxiella burnetii (strain Q154)).